We begin with the raw amino-acid sequence, 509 residues long: ATP synthase subunit alpha (509 aa).

ATP is bound at residue 171-178 (GDRQTGKT).

The protein belongs to the ATPase alpha/beta chains family. In terms of assembly, F-type ATPases have 2 components, CF(1) - the catalytic core - and CF(0) - the membrane proton channel. CF(1) has five subunits: alpha(3), beta(3), gamma(1), delta(1), epsilon(1). CF(0) has three main subunits: a(1), b(2) and c(9-12). The alpha and beta chains form an alternating ring which encloses part of the gamma chain. CF(1) is attached to CF(0) by a central stalk formed by the gamma and epsilon chains, while a peripheral stalk is formed by the delta and b chains.

The protein localises to the cell inner membrane. The enzyme catalyses ATP + H2O + 4 H(+)(in) = ADP + phosphate + 5 H(+)(out). Functionally, produces ATP from ADP in the presence of a proton gradient across the membrane. The alpha chain is a regulatory subunit. The sequence is that of ATP synthase subunit alpha from Neorickettsia sennetsu (strain ATCC VR-367 / Miyayama) (Ehrlichia sennetsu).